Here is an 83-residue protein sequence, read N- to C-terminus: uncharacterized protein (83 aa).

Residues 15-36 (RLKNGRGNKTMSESDYNTSDSG) form a disordered region. The span at 21–35 (GNKTMSESDYNTSDS) shows a compositional bias: polar residues.

This is an uncharacterized protein from Aedes vexans (Inland floodwater mosquito).